Here is a 269-residue protein sequence, read N- to C-terminus: 3-methyl-2-oxobutanoate hydroxymethyltransferase (269 aa).

Mg(2+) is bound by residues Asp-50 and Asp-89. 3-methyl-2-oxobutanoate contacts are provided by residues 50 to 51 (DS), Asp-89, and Lys-119. Glu-121 is a binding site for Mg(2+). The active-site Proton acceptor is the Glu-187.

This sequence belongs to the PanB family. Homodecamer; pentamer of dimers. Requires Mg(2+) as cofactor.

The protein localises to the cytoplasm. It catalyses the reaction 3-methyl-2-oxobutanoate + (6R)-5,10-methylene-5,6,7,8-tetrahydrofolate + H2O = 2-dehydropantoate + (6S)-5,6,7,8-tetrahydrofolate. The protein operates within cofactor biosynthesis; (R)-pantothenate biosynthesis; (R)-pantoate from 3-methyl-2-oxobutanoate: step 1/2. Functionally, catalyzes the reversible reaction in which hydroxymethyl group from 5,10-methylenetetrahydrofolate is transferred onto alpha-ketoisovalerate to form ketopantoate. The chain is 3-methyl-2-oxobutanoate hydroxymethyltransferase (panB) from Corynebacterium glutamicum (strain ATCC 13032 / DSM 20300 / JCM 1318 / BCRC 11384 / CCUG 27702 / LMG 3730 / NBRC 12168 / NCIMB 10025 / NRRL B-2784 / 534).